A 300-amino-acid chain; its full sequence is Fluorinase (300 aa).

S-adenosyl-L-methionine is bound by residues aspartate 16, aspartate 21 to serine 23, tyrosine 77, serine 158, aspartate 211, asparagine 216, serine 270 to arginine 271, and arginine 278 to alanine 280.

This sequence belongs to the SAM hydrolase / SAM-dependent halogenase family. As to quaternary structure, homohexamer.

It catalyses the reaction fluoride + S-adenosyl-L-methionine = 5'-deoxy-5'-fluoroadenosine + L-methionine. The enzyme catalyses chloride + S-adenosyl-L-methionine = 5'-chloro-5'-deoxyadenosine + L-methionine. Its activity is regulated as follows. Activity is severely inhibited by 1 mM Cu(2+) or Zn(2+). In terms of biological role, catalyzes the formation of a C-F bond by combining S-adenosyl-L-methionine (SAM) and fluoride to generate 5'-fluoro-5'-deoxyadenosine (5'-FDA) and L-methionine. Probably involved in fluoroacetate (FAc) and 4-fluorothreonine (4-FT) biosynthesis. In vitro, can also catalyze the conversion of chloride and SAM to 5'-chloro-5'-deoxyadenosine (5'-CIDA) and L-methionine in the presence of L-amino acid oxidase. This chain is Fluorinase, found in Nocardia brasiliensis (strain ATCC 700358 / HUJEG-1).